A 314-amino-acid polypeptide reads, in one-letter code: Cell division protein FtsQ (314 aa).

Basic and acidic residues-rich tracts occupy residues 1–15 (MTEH…RVAD) and 30–57 (ESKD…ERRA). Positions 1–57 (MTEHNEDPQIERVADDAADEEAVTEPLATESKDEPAEHPEFEGPRRRARRERAERRA) are disordered. Topologically, residues 1 to 99 (MTEHNEDPQI…AARGVVRGLK (99 aa)) are cytoplasmic. A helical transmembrane segment spans residues 100 to 120 (ALLATVVLAVVGIGLGLALYF). At 121–314 (TPAMSAREIV…VSSPDLPTVK (194 aa)) the chain is on the extracellular side. The 69-residue stretch at 124-192 (MSAREIVIIG…SALRITIVER (69 aa)) folds into the POTRA domain.

This sequence belongs to the FtsQ/DivIB family. FtsQ subfamily.

The protein localises to the cell membrane. In terms of biological role, essential cell division protein. In Mycobacterium bovis (strain ATCC BAA-935 / AF2122/97), this protein is Cell division protein FtsQ.